The following is a 696-amino-acid chain: Neurogenic protein big brain (696 aa).

At 1-71 (MADESLHTVP…LEFWRSIISE (71 aa)) the chain is on the cytoplasmic side. Position 46 is a phosphoserine (Ser-46). Thr-47 is subject to Phosphothreonine. A helical transmembrane segment spans residues 72 to 93 (CLASFMYVFIVCGAAAGVGVGA). Over 94–97 (SVSS) the chain is Extracellular. A helical transmembrane segment spans residues 98–118 (VLLATALASGLAMATLTQCFL). Residues 119 to 143 (HISGAHINPAVTLALCVVRSISPIR) are Cytoplasmic-facing. Residues 126 to 128 (NPA) carry the NPA 1 motif. A helical membrane pass occupies residues 144–167 (AAMYITAQCGGGIAGAALLYGVTV). Topologically, residues 168 to 189 (PGYQGNLQAAISHSAALAAWER) are extracellular. Residues 190 to 208 (FGVEFILTFLVVLCYFVST) form a helical membrane-spanning segment. Residues 209-213 (DPMKK) lie on the Cytoplasmic side of the membrane. A helical membrane pass occupies residues 214–234 (FMGNSAASIGCAYSACCFVSM). The Extracellular portion of the chain corresponds to 235–256 (PYLNPARSLGPSFVLNKWDSHW). The short motif at 238 to 240 (NPA) is the NPA 2 element. Residues 257–273 (VYWFGPLVGGMASGLVY) traverse the membrane as a helical segment. Residue Tyr-273 is modified to Phosphotyrosine; by Src. Topologically, residues 274 to 696 (EYIFNSRNRN…HYGMLPLRPN (423 aa)) are cytoplasmic. The residue at position 300 (Ser-300) is a Phosphoserine. The disordered stretch occupies residues 314–345 (NKYQQSQGTYPRGQSNGNGGGQAAGNGQHQAA). Tyr-367 carries the post-translational modification Phosphotyrosine; by Abl. Tyr-384 carries the post-translational modification Phosphotyrosine; by Src. Ser-394 is subject to Phosphoserine. Disordered stretches follow at residues 436–634 (MRTQ…KVSA) and 650–696 (TSQG…LRPN). 2 stretches are compositionally biased toward low complexity: residues 439-451 (QQQQ…QQQQ) and 462-472 (QNQNVQNQMQQ). Tyr-478 is modified (phosphotyrosine; by Src). The span at 487–532 (QQQPIQQQQQQQQQQQLQQQQPNMGVQQQQMQPPPQMMSDPQQQPQ) shows a compositional bias: low complexity. Positions 549-558 (GNHKYDRRDP) are enriched in basic and acidic residues. Ser-576 is subject to Phosphoserine. Over residues 576-587 (SDDSSYGSYHGS) the composition is skewed to low complexity. The span at 599 to 616 (EPSPPPPPMLMYAPPPQP) shows a compositional bias: pro residues. Tyr-610 carries the post-translational modification Phosphotyrosine; by Abl. Low complexity predominate over residues 659–686 (QQQQQQQQQQQQQQQQQQQQMMMQQQQQ).

The protein belongs to the MIP/aquaporin (TC 1.A.8) family. In terms of processing, phosphorylated at its C-terminus. Detected in all tissues with neurogenic abilities, for example the neurogenic ectoderm.

Its subcellular location is the membrane. Essential for proper differentiation of ectoderm. Acts synergistically with neurogenic locus proteins Notch and Delta during the separation of neural and epidermal cell lineages in response to the lateral inhibition signal. Voltage-insensitive monovalent cation channel. Ion transport is blocked by the presence of divalent cations. The chain is Neurogenic protein big brain (bib) from Drosophila melanogaster (Fruit fly).